A 337-amino-acid chain; its full sequence is Anthranilate phosphoribosyltransferase (337 aa).

5-phospho-alpha-D-ribose 1-diphosphate is bound by residues Gly80, 83 to 84 (GD), Thr88, 90 to 93 (NIST), 108 to 116 (KHGNRAVSS), and Ser120. An anthranilate-binding site is contributed by Gly80. Ser92 provides a ligand contact to Mg(2+). Anthranilate is bound at residue Asn111. Anthranilate is bound at residue Arg166. Mg(2+) is bound by residues Asp224 and Glu225.

Belongs to the anthranilate phosphoribosyltransferase family. As to quaternary structure, homodimer. The cofactor is Mg(2+).

It catalyses the reaction N-(5-phospho-beta-D-ribosyl)anthranilate + diphosphate = 5-phospho-alpha-D-ribose 1-diphosphate + anthranilate. It functions in the pathway amino-acid biosynthesis; L-tryptophan biosynthesis; L-tryptophan from chorismate: step 2/5. Catalyzes the transfer of the phosphoribosyl group of 5-phosphorylribose-1-pyrophosphate (PRPP) to anthranilate to yield N-(5'-phosphoribosyl)-anthranilate (PRA). The protein is Anthranilate phosphoribosyltransferase of Anaeromyxobacter sp. (strain K).